The following is a 562-amino-acid chain: Transmembrane E3 ubiquitin-protein ligase FLY1 (562 aa).

The N-terminal stretch at 1–32 is a signal peptide; it reads MKKREHLGLGFFEWQIILWLSIWLAISQQALG. Residues 33–262 are Lumenal-facing; the sequence is LRPIREKPRS…TSVNVEVYYN (230 aa). A helical transmembrane segment spans residues 263–283; the sequence is KAVNYTLMVTFVSFLQVLLLI. Over 284–297 the chain is Cytoplasmic; it reads RQMEHGNTQSGAAK. Residues 298 to 318 traverse the membrane as a helical segment; it reads VSIVMIGQQAIMDAYLCLLHL. At 319-321 the chain is on the lumenal side; that stretch reads TAG. A helical membrane pass occupies residues 322 to 342; that stretch reads ILVESLFNAFATAAFFKFVVF. Topologically, residues 343 to 373 are cytoplasmic; the sequence is SIFEMRYLLAIWKATRPSNSGEGWETMRREL. A helical membrane pass occupies residues 374 to 394; the sequence is SFLYSRFYGILLGGILIMYQF. Residues 395–397 are Lumenal-facing; it reads HNY. Residues 398–418 form a helical membrane-spanning segment; sequence MQPILLLMYSFWIPQIVANVV. The Cytoplasmic portion of the chain corresponds to 419–426; sequence RDSRKPLH. The chain crosses the membrane as a helical span at residues 427 to 447; sequence PYYILGMTATRLAIPLYVFGC. At 448–458 the chain is on the lumenal side; it reads PHNFMRVEPNK. A helical membrane pass occupies residues 459–479; sequence VWCICLCTFMGLQAVILLLQH. At 480–562 the chain is on the cytoplasmic side; that stretch reads YFGSRCFVPR…PTCRRSLPPA (83 aa). The segment at 512 to 556 adopts an RING-type; atypical zinc-finger fold; it reads CVICMTAIDLRQHTSDCMVTPCEHFFHSGCLQRWMDIKMECPTCR.

In terms of tissue distribution, highly expressed in stems. Expressed in root xylem and seed coat.

It is found in the endomembrane system. It catalyses the reaction S-ubiquitinyl-[E2 ubiquitin-conjugating enzyme]-L-cysteine + [acceptor protein]-L-lysine = [E2 ubiquitin-conjugating enzyme]-L-cysteine + N(6)-ubiquitinyl-[acceptor protein]-L-lysine.. It participates in protein modification; protein ubiquitination. Functionally, E3 ubiquitin-protein ligase that regulates the degree of methylesterification of pectin in seed mucilage. May be involved in the recycling of pectin methylesterase enzymes in the endomembrane system of seed coat epidermal cells. Possesses E3 ubiquitin-protein ligase activity in vitro when associated with the E1 enzyme UBA1 and the E2 enzyme UBC8. May be involved in xylem development. This chain is Transmembrane E3 ubiquitin-protein ligase FLY1, found in Arabidopsis thaliana (Mouse-ear cress).